A 420-amino-acid chain; its full sequence is Serine--tRNA ligase (420 aa).

225 to 227 (TLE) contacts L-serine. Position 256–258 (256–258 (RQE)) interacts with ATP. Glutamate 279 lines the L-serine pocket. Position 343 to 346 (343 to 346 (EVSS)) interacts with ATP. Residue threonine 379 coordinates L-serine.

This sequence belongs to the class-II aminoacyl-tRNA synthetase family. Type-1 seryl-tRNA synthetase subfamily. In terms of assembly, homodimer. The tRNA molecule binds across the dimer.

It is found in the cytoplasm. It catalyses the reaction tRNA(Ser) + L-serine + ATP = L-seryl-tRNA(Ser) + AMP + diphosphate + H(+). The enzyme catalyses tRNA(Sec) + L-serine + ATP = L-seryl-tRNA(Sec) + AMP + diphosphate + H(+). Its pathway is aminoacyl-tRNA biosynthesis; selenocysteinyl-tRNA(Sec) biosynthesis; L-seryl-tRNA(Sec) from L-serine and tRNA(Sec): step 1/1. Its function is as follows. Catalyzes the attachment of serine to tRNA(Ser). Is also able to aminoacylate tRNA(Sec) with serine, to form the misacylated tRNA L-seryl-tRNA(Sec), which will be further converted into selenocysteinyl-tRNA(Sec). The sequence is that of Serine--tRNA ligase from Mycoplasma pneumoniae (strain ATCC 29342 / M129 / Subtype 1) (Mycoplasmoides pneumoniae).